The primary structure comprises 90 residues: UPF0297 protein ABC1593 (90 aa).

The protein belongs to the UPF0297 family.

The polypeptide is UPF0297 protein ABC1593 (Shouchella clausii (strain KSM-K16) (Alkalihalobacillus clausii)).